The following is a 127-amino-acid chain: Large ribosomal subunit protein bL12 (127 aa).

Belongs to the bacterial ribosomal protein bL12 family. In terms of assembly, homodimer. Part of the ribosomal stalk of the 50S ribosomal subunit. Forms a multimeric L10(L12)X complex, where L10 forms an elongated spine to which 2 to 4 L12 dimers bind in a sequential fashion. Binds GTP-bound translation factors.

In terms of biological role, forms part of the ribosomal stalk which helps the ribosome interact with GTP-bound translation factors. Is thus essential for accurate translation. The polypeptide is Large ribosomal subunit protein bL12 (Clavibacter michiganensis subsp. michiganensis (strain NCPPB 382)).